Consider the following 1007-residue polypeptide: Lysosomal alpha-mannosidase (1007 aa).

The first 47 residues, M1–A47, serve as a signal peptide directing secretion. 2 cysteine pairs are disulfide-bonded: C53/C356 and C266/C271. The Zn(2+) site is built by H70 and D72. N131 carries N-linked (GlcNAc...) asparagine glycosylation. D194 serves as a coordination point for Zn(2+). Residue D194 is the Nucleophile of the active site. N-linked (GlcNAc...) asparagine glycosylation is found at N308, N343, and N365. 2 disulfides stabilise this stretch: C410/C470 and C491/C499. H444 is a Zn(2+) binding site. N495, N540, N639, N686, N760, and N927 each carry an N-linked (GlcNAc...) asparagine glycan.

Belongs to the glycosyl hydrolase 38 family. The cofactor is Zn(2+).

The protein resides in the lysosome. The catalysed reaction is Hydrolysis of terminal, non-reducing alpha-D-mannose residues in alpha-D-mannosides.. Necessary for the catabolism of N-linked carbohydrates released during glycoprotein turnover. The polypeptide is Lysosomal alpha-mannosidase (MAN2B1) (Cavia porcellus (Guinea pig)).